A 127-amino-acid chain; its full sequence is Small ribosomal subunit protein uS13 (127 aa).

A disordered region spans residues 93 to 127 (RQGLPVRGQRTRTNGRTRRGRRVTVAGKKKAPAKK). The span at 101–127 (QRTRTNGRTRRGRRVTVAGKKKAPAKK) shows a compositional bias: basic residues.

The protein belongs to the universal ribosomal protein uS13 family. Part of the 30S ribosomal subunit. Forms a loose heterodimer with protein S19. Forms two bridges to the 50S subunit in the 70S ribosome.

Functionally, located at the top of the head of the 30S subunit, it contacts several helices of the 16S rRNA. In the 70S ribosome it contacts the 23S rRNA (bridge B1a) and protein L5 of the 50S subunit (bridge B1b), connecting the 2 subunits; these bridges are implicated in subunit movement. Contacts the tRNAs in the A and P-sites. The chain is Small ribosomal subunit protein uS13 from Crocosphaera subtropica (strain ATCC 51142 / BH68) (Cyanothece sp. (strain ATCC 51142)).